The primary structure comprises 670 residues: MLFSRASKIRVSQLMRRLQSTAVGRAASRPEMLQLEAKLADVMKDKKDLGRVMAALRETVQGVVESGGLSDRTLLRSNSVTNDLGKLLEQSNKQLRGEIETDTVPPTPYEILVTLVDLKLARRTHYEQVMQYLLANGDAEAALGVWVKYLEFVAQMPQREGAEETYVMAYASIAYFFLGAADVDVLLQLLNREAGQYKDIPLFRIEQLQSQIGLSESNLTKVRENLAAIHKQLLVDKKGYFLDVILPECYYPLLHSYYKRYSDLEGLVDEDLAAGFMINFSRIGKHTLAMKCYNDAVKKAGGKPGVVLKNALLTVVARMGETAINRVNATRRIEAVWNSYFREDDVIDVSSYKALLNALIILKRFDKVQSVWELDIPEELKKDHTLLQTYLEGCAHRTNVSLPELLKQLPEAVTDVNLANAVLLKMANTSGSASMFDSFYDKTFKGPGSLRPTPLTLATRLLMGYATASDPAKFNFFDHTPIPRTMKNAVAEEFLKICSDSEAIKRFYESSKASLKLDVFSSRRVGKIIEASFNIGDWKTAEAIFKDHITTSNAKSQINVHTLLPLIAGFSNLILRNNEPSFLSKLDTYWQLASRVYKTIPFEFLNKTATAVASLCLKEAKLTDEHYNFINAVVMSELARSKKDHGYVLNARIYHSITKDQKISVPPELL.

The N-terminal 27 residues, 1 to 27 (MLFSRASKIRVSQLMRRLQSTAVGRAA), are a transit peptide targeting the mitochondrion.

Its subcellular location is the mitochondrion. Functionally, may be involved in the control of meiotic sister-chromatid recombination. This is Meiotic sister-chromatid recombination protein 6, mitochondrial (MSC6) from Eremothecium gossypii (strain ATCC 10895 / CBS 109.51 / FGSC 9923 / NRRL Y-1056) (Yeast).